The sequence spans 367 residues: Chorismate synthase (367 aa).

R48 serves as a coordination point for NADP(+). Residues 125–127 (RSS), 241–242 (NA), G285, 300–304 (KPTSS), and R326 each bind FMN.

This sequence belongs to the chorismate synthase family. As to quaternary structure, homotetramer. FMNH2 serves as cofactor.

The catalysed reaction is 5-O-(1-carboxyvinyl)-3-phosphoshikimate = chorismate + phosphate. It functions in the pathway metabolic intermediate biosynthesis; chorismate biosynthesis; chorismate from D-erythrose 4-phosphate and phosphoenolpyruvate: step 7/7. Functionally, catalyzes the anti-1,4-elimination of the C-3 phosphate and the C-6 proR hydrogen from 5-enolpyruvylshikimate-3-phosphate (EPSP) to yield chorismate, which is the branch point compound that serves as the starting substrate for the three terminal pathways of aromatic amino acid biosynthesis. This reaction introduces a second double bond into the aromatic ring system. The polypeptide is Chorismate synthase (Dinoroseobacter shibae (strain DSM 16493 / NCIMB 14021 / DFL 12)).